A 999-amino-acid polypeptide reads, in one-letter code: Protein Smaug (999 aa).

The span at methionine 1–threonine 37 shows a compositional bias: polar residues. 3 disordered regions span residues methionine 1 to serine 45, threonine 50 to proline 69, and cysteine 321 to serine 370. Residues cysteine 321–serine 338 show a composition bias toward low complexity. 2 positions are modified to phosphoserine: serine 564 and serine 575. The segment at glutamate 583–methionine 763 is interaction with cup. Residues glycine 600–lysine 654 enclose the SAM domain. Positions histidine 773–methionine 892 are disordered. 2 stretches are compositionally biased toward polar residues: residues lysine 801 to leucine 822 and histidine 854 to proline 864. Serine 972 carries the phosphoserine modification.

It belongs to the SMAUG family. Interacts with oskar (osk). Binds to the 3'-UTR of nos. Interacts with cup, which in turn recruits eIF4-E, leading to an indirect interaction between smg and eIF4-E that prevents mRNA translation.

The protein resides in the cytoplasm. Translation regulator that binds to the 3'-UTR of specific mRNAs such as nanos (nos) and prevent their translation. Prevents translation of unlocalized nos in the bulk cytoplasm via the recruitment of cup. The chain is Protein Smaug (smg) from Drosophila yakuba (Fruit fly).